We begin with the raw amino-acid sequence, 579 residues long: Protein disulfide isomerase-like 1-3 (579 aa).

Residues 1 to 25 form the signal peptide; the sequence is MASSSTSISLLLFVSFILLLVNSRA. Residue asparagine 27 is glycosylated (N-linked (GlcNAc...) asparagine). Composition is skewed to basic and acidic residues over residues 44 to 69 and 80 to 89; these read EESK…RDFE and EFHHGDHGYE. Residues 44-91 form a disordered region; the sequence is EESKEQSHGGGSYHEEEHDHQHRDFENYDDLEQGGGEFHHGDHGYEEE. In terms of domain architecture, Thioredoxin 1 spans 81 to 204; it reads FHHGDHGYEE…IVTWLKKKAS (124 aa). N-linked (GlcNAc...) asparagine glycosylation is found at asparagine 108 and asparagine 115. Active-site nucleophile residues include cysteine 128 and cysteine 131. A disulfide bond links cysteine 128 and cysteine 131. Asparagine 209, asparagine 293, asparagine 313, and asparagine 338 each carry an N-linked (GlcNAc...) asparagine glycan. Residues 416-546 form the Thioredoxin 2 domain; sequence DFLADKLKPF…LYKFLKKHAS (131 aa). Catalysis depends on nucleophile residues cysteine 467 and cysteine 470. Cysteine 467 and cysteine 470 are oxidised to a cystine. N-linked (GlcNAc...) asparagine glycosylation is present at asparagine 520. Residues 558–579 form a disordered region; sequence EPVISTMKSDEKIEGDSSKDEL. A compositionally biased stretch (basic and acidic residues) spans 565–579; it reads KSDEKIEGDSSKDEL. The Prevents secretion from ER signature appears at 576-579; that stretch reads KDEL.

Belongs to the protein disulfide isomerase family. As to expression, widely expressed.

The protein localises to the endoplasmic reticulum lumen. The enzyme catalyses Catalyzes the rearrangement of -S-S- bonds in proteins.. In terms of biological role, acts as a protein-folding catalyst that interacts with nascent polypeptides to catalyze the formation, isomerization, and reduction or oxidation of disulfide bonds. The polypeptide is Protein disulfide isomerase-like 1-3 (PDIL1-3) (Arabidopsis thaliana (Mouse-ear cress)).